The sequence spans 261 residues: Flap endonuclease Xni (261 aa).

Residue Asp105 coordinates Mg(2+). Positions 164 to 256 (SQFLDLMALA…DFRVNSPTKA (93 aa)) constitute a 5'-3' exonuclease domain. Residues Leu172, Ala173, Pro181, Ile183, and Ile186 each coordinate K(+). Positions 185–190 (GIGPKS) are interaction with DNA.

The protein belongs to the Xni family. Mg(2+) serves as cofactor. K(+) is required as a cofactor.

Its function is as follows. Has flap endonuclease activity. During DNA replication, flap endonucleases cleave the 5'-overhanging flap structure that is generated by displacement synthesis when DNA polymerase encounters the 5'-end of a downstream Okazaki fragment. This Shewanella oneidensis (strain ATCC 700550 / JCM 31522 / CIP 106686 / LMG 19005 / NCIMB 14063 / MR-1) protein is Flap endonuclease Xni.